Reading from the N-terminus, the 507-residue chain is NADH-quinone oxidoreductase subunit N (507 aa).

15 helical membrane passes run 17–37 (LVTL…MLTA), 46–66 (VMIL…LSQG), 81–101 (YALF…ILCY), 113–133 (ALYI…ASSH), 134–154 (FASF…LIAY), 168–188 (YLIL…LVYA), 190–210 (LGTM…AALE), 211–231 (LYGL…LALV), 245–265 (PVPI…VLLL), 279–299 (ITFA…LLAL), 307–327 (ILAY…LAFD), 334–354 (VAYF…VVTV), 392–412 (AGVF…MGFI), 425–445 (SLWM…FYYM), and 478–498 (LAAL…LIGV).

It belongs to the complex I subunit 2 family. In terms of assembly, NDH-1 is composed of 14 different subunits. Subunits NuoA, H, J, K, L, M, N constitute the membrane sector of the complex.

The protein resides in the cell inner membrane. The catalysed reaction is a quinone + NADH + 5 H(+)(in) = a quinol + NAD(+) + 4 H(+)(out). NDH-1 shuttles electrons from NADH, via FMN and iron-sulfur (Fe-S) centers, to quinones in the respiratory chain. The immediate electron acceptor for the enzyme in this species is believed to be ubiquinone. Couples the redox reaction to proton translocation (for every two electrons transferred, four hydrogen ions are translocated across the cytoplasmic membrane), and thus conserves the redox energy in a proton gradient. The polypeptide is NADH-quinone oxidoreductase subunit N (Nitrosospira multiformis (strain ATCC 25196 / NCIMB 11849 / C 71)).